Here is a 1229-residue protein sequence, read N- to C-terminus: ABC transporter B family member 3 (1229 aa).

The helical transmembrane segment at 22 to 42 (VLLMIVGSIGAIGNGVGFPLM) threads the bilayer. One can recognise an ABC transmembrane type-1 1 domain in the interval 25 to 313 (MIVGSIGAIG…TTPCLTAFAA (289 aa)). N-linked (GlcNAc...) asparagine glycosylation occurs at Asn56. The next 5 helical transmembrane spans lie at 73–93 (FVYL…CWMI), 149–169 (FIQL…KGWL), 172–192 (LVML…PIIV), 252–272 (GLGL…AIWF), and 281–301 (GYTG…SMSL). Positions 348–584 (IELRDVCFSY…HEGAYAQLIR (237 aa)) constitute an ABC transporter 1 domain. An ATP-binding site is contributed by 383–390 (GESGSGKS). Residue Asn450 is glycosylated (N-linked (GlcNAc...) asparagine). The segment covering 594–606 (RLESSNELRDRSI) has biased composition (basic and acidic residues). The tract at residues 594–614 (RLESSNELRDRSINRGSSRNI) is disordered. Asn645 is a glycosylation site (N-linked (GlcNAc...) asparagine). The next 2 membrane-spanning stretches (helical) occupy residues 661-681 (ILIL…IFGI) and 706-726 (MIFV…TYLF). An ABC transmembrane type-1 2 domain is found at 662-949 (LILGTLLGAV…ASSFAPDSSK (288 aa)). N-linked (GlcNAc...) asparagine glycosylation is present at Asn758. 3 helical membrane passes run 797 to 817 (IIAF…IPLI), 888 to 908 (GVGF…CFYV), and 923 to 943 (VFQV…ASSF). An ABC transporter 2 domain is found at 984–1222 (IELCHISFTY…EGGVYASLVQ (239 aa)). Residue 1019–1026 (GESGSGKS) coordinates ATP. Residues Asn1073 and Asn1173 are each glycosylated (N-linked (GlcNAc...) asparagine).

The protein belongs to the ABC transporter superfamily. ABCB family. Multidrug resistance exporter (TC 3.A.1.201) subfamily.

The protein resides in the membrane. The polypeptide is ABC transporter B family member 3 (ABCB3) (Arabidopsis thaliana (Mouse-ear cress)).